A 158-amino-acid polypeptide reads, in one-letter code: Transcription elongation factor GreA (158 aa).

It belongs to the GreA/GreB family.

Functionally, necessary for efficient RNA polymerase transcription elongation past template-encoded arresting sites. The arresting sites in DNA have the property of trapping a certain fraction of elongating RNA polymerases that pass through, resulting in locked ternary complexes. Cleavage of the nascent transcript by cleavage factors such as GreA or GreB allows the resumption of elongation from the new 3'terminus. GreA releases sequences of 2 to 3 nucleotides. This is Transcription elongation factor GreA from Allorhizobium ampelinum (strain ATCC BAA-846 / DSM 112012 / S4) (Agrobacterium vitis (strain S4)).